The sequence spans 262 residues: Small ribosomal subunit protein uS2 (262 aa).

Positions 224–262 (GKQGQDDAQQETADDNAANETVSEDSLKNLKNSVEGKED) are disordered.

It belongs to the universal ribosomal protein uS2 family.

This is Small ribosomal subunit protein uS2 from Limosilactobacillus reuteri (strain DSM 20016) (Lactobacillus reuteri).